The following is a 345-amino-acid chain: Tropomodulin-4 (345 aa).

Disordered regions lie at residues 40–64 (PENMLLPAGLRQRDQTKKSPTGPLD) and 326–345 (ARAAHAMTRNNELRRQQKKR). Residues 336-345 (NELRRQQKKR) are compositionally biased toward basic and acidic residues.

The protein belongs to the tropomodulin family. In terms of assembly, binds to the N-terminus of tropomyosin and to actin.

The protein resides in the cytoplasm. It is found in the cytoskeleton. Its function is as follows. Blocks the elongation and depolymerization of the actin filaments at the pointed end. The Tmod/TM complex contributes to the formation of the short actin protofilament, which in turn defines the geometry of the membrane skeleton. This chain is Tropomodulin-4 (Tmod4), found in Mus musculus (Mouse).